We begin with the raw amino-acid sequence, 298 residues long: Tyrosine recombinase XerC (298 aa).

Residues Met-1–Val-83 form the Core-binding (CB) domain. Residues His-104–Asp-283 enclose the Tyr recombinase domain. Catalysis depends on residues Arg-144, Lys-166, His-235, Arg-238, and His-261. The active-site O-(3'-phospho-DNA)-tyrosine intermediate is the Tyr-270.

This sequence belongs to the 'phage' integrase family. XerC subfamily. As to quaternary structure, forms a cyclic heterotetrameric complex composed of two molecules of XerC and two molecules of XerD.

It localises to the cytoplasm. Functionally, site-specific tyrosine recombinase, which acts by catalyzing the cutting and rejoining of the recombining DNA molecules. The XerC-XerD complex is essential to convert dimers of the bacterial chromosome into monomers to permit their segregation at cell division. It also contributes to the segregational stability of plasmids. This is Tyrosine recombinase XerC from Chromohalobacter salexigens (strain ATCC BAA-138 / DSM 3043 / CIP 106854 / NCIMB 13768 / 1H11).